The following is a 702-amino-acid chain: Lipase maturation factor 2 (702 aa).

8 helical membrane-spanning segments follow: residues 10–30 (LFLQ…YTQI), 75–95 (AQGL…ALLL), 164–184 (DLPF…SGVV), 226–246 (LSVV…FAPI), 259–279 (LLQV…LTLV), 316–336 (LLLE…YFGL), 363–383 (VTLP…LVVL), and 398–418 (AGIQ…ISLV). A glycan (N-linked (GlcNAc...) asparagine) is linked at Asn488. A helical membrane pass occupies residues 636–656 (ILLWGLFGAVVAIRVVQTLLA). Residues 660–702 (LQSSKQTREEKRKQTSKKDSRAASEQAAANSNSRDSWAPRRKK) are disordered. A compositionally biased stretch (basic and acidic residues) spans 665 to 681 (QTREEKRKQTSKKDSRA). Positions 682-693 (ASEQAAANSNSR) are enriched in low complexity.

The protein belongs to the lipase maturation factor family.

It localises to the endoplasmic reticulum membrane. Its function is as follows. Involved in the maturation of specific proteins in the endoplasmic reticulum. May be required for maturation and transport of active lipoprotein lipase (LPL) through the secretory pathway. The chain is Lipase maturation factor 2 (Lmf2) from Mus musculus (Mouse).